Reading from the N-terminus, the 1164-residue chain is DNA-directed RNA polymerase 132 kDa polypeptide (1164 aa).

Belongs to the RNA polymerase beta chain family. As to quaternary structure, the DNA-dependent RNA polymerase used for intermediate and late genes expression consists of eight subunits (147) kDa, (133) kDa, (35) kDa, (30) kDa, (22) kDa, (19) kDa, (18) kDa and (7) kDa totalling more than 500 kDa in mass. The same holoenzyme, with the addition of the transcription-specificity factor RAP94, is used for early gene expression.

The protein localises to the virion. The catalysed reaction is RNA(n) + a ribonucleoside 5'-triphosphate = RNA(n+1) + diphosphate. In terms of biological role, part of the DNA-dependent RNA polymerase which catalyzes the transcription of viral DNA into RNA using the four ribonucleoside triphosphates as substrates. Responsible for the transcription of early, intermediate and late genes. DNA-dependent RNA polymerase associates with the early transcription factor (ETF), itself composed of D6 and A7, thereby allowing the early genes transcription. Late transcription, and probably also intermediate transcription, require newly synthesized RNA polymerase. The chain is DNA-directed RNA polymerase 132 kDa polypeptide (RPO132) from Cowpox virus (strain GRI-90 / Grishak) (CPV).